The following is a 318-amino-acid chain: Deoxyribose-phosphate aldolase (318 aa).

Residue aspartate 155 is the Proton donor/acceptor of the active site. Lysine 218 serves as the catalytic Schiff-base intermediate with acetaldehyde. Catalysis depends on lysine 254, which acts as the Proton donor/acceptor.

It belongs to the DeoC/FbaB aldolase family. DeoC type 2 subfamily. Interacts with YBX1.

The protein localises to the cytoplasm. It is found in the cytoplasmic granule. Its subcellular location is the nucleus. It carries out the reaction 2-deoxy-D-ribose 5-phosphate = D-glyceraldehyde 3-phosphate + acetaldehyde. It participates in carbohydrate degradation; 2-deoxy-D-ribose 1-phosphate degradation; D-glyceraldehyde 3-phosphate and acetaldehyde from 2-deoxy-alpha-D-ribose 1-phosphate: step 2/2. Its function is as follows. Catalyzes a reversible aldol reaction between acetaldehyde and D-glyceraldehyde 3-phosphate to generate 2-deoxy-D-ribose 5-phosphate. Participates in stress granule (SG) assembly. May allow ATP production from extracellular deoxyinosine in conditions of energy deprivation. In Mus musculus (Mouse), this protein is Deoxyribose-phosphate aldolase (Dera).